A 274-amino-acid chain; its full sequence is Undecaprenyl-diphosphatase (274 aa).

8 helical membrane-spanning segments follow: residues Leu9 to Val29, Pro47 to Phe67, Ile95 to Tyr115, Val120 to Leu140, Leu161 to Ile181, Phe197 to Ser217, Leu224 to Ile244, and Asn254 to Leu274.

The protein belongs to the UppP family.

The protein localises to the cell inner membrane. The catalysed reaction is di-trans,octa-cis-undecaprenyl diphosphate + H2O = di-trans,octa-cis-undecaprenyl phosphate + phosphate + H(+). Functionally, catalyzes the dephosphorylation of undecaprenyl diphosphate (UPP). Confers resistance to bacitracin. This chain is Undecaprenyl-diphosphatase, found in Prochlorococcus marinus (strain AS9601).